Reading from the N-terminus, the 294-residue chain is NAD kinase (294 aa).

The Proton acceptor role is filled by D74. NAD(+) contacts are provided by residues 74-75 (DG), 148-149 (ND), R159, R176, D178, 189-194 (TAYALS), and Q247.

The protein belongs to the NAD kinase family. It depends on a divalent metal cation as a cofactor.

The protein resides in the cytoplasm. The catalysed reaction is NAD(+) + ATP = ADP + NADP(+) + H(+). Its function is as follows. Involved in the regulation of the intracellular balance of NAD and NADP, and is a key enzyme in the biosynthesis of NADP. Catalyzes specifically the phosphorylation on 2'-hydroxyl of the adenosine moiety of NAD to yield NADP. The chain is NAD kinase from Azoarcus sp. (strain BH72).